We begin with the raw amino-acid sequence, 107 residues long: Replication initiation control protein YabA (107 aa).

Residues His-81, Cys-83, Cys-97, and Cys-100 each coordinate Zn(2+).

Belongs to the YabA family. As to quaternary structure, homotetramer. Interacts with both DnaA and DnaN, acting as a bridge between these two proteins. Zn(2+) serves as cofactor.

Its subcellular location is the cytoplasm. It is found in the nucleoid. Its function is as follows. Involved in control of chromosome replication initiation. Inhibits the cooperative binding of DnaA to the oriC region, thus negatively regulating initiation of chromosome replication. Inhibits the ability of DnaA-ATP to form a helix on DNA; does not disassemble preformed DnaA-DNA helices. Decreases the residence time of DnaA on the chromosome at its binding sites (oriC, replication forks and promoter-binding sites). Tethers DnaA to the replication machinery via the DNA polymerase beta sliding clamp subunit (dnaN). Associates with oriC and other DnaA targets on the chromosome in a DnaA-dependent manner. This is Replication initiation control protein YabA from Streptococcus pyogenes serotype M18 (strain MGAS8232).